The following is a 140-amino-acid chain: Translation initiation factor 2 subunit beta (140 aa).

Belongs to the eIF-2-beta/eIF-5 family. Heterotrimer composed of an alpha, a beta and a gamma chain.

Its function is as follows. eIF-2 functions in the early steps of protein synthesis by forming a ternary complex with GTP and initiator tRNA. The chain is Translation initiation factor 2 subunit beta (eif2b) from Pyrococcus abyssi (strain GE5 / Orsay).